The sequence spans 38 residues: Large ribosomal subunit protein bL36 (38 aa).

The protein belongs to the bacterial ribosomal protein bL36 family.

In Synechococcus sp. (strain JA-2-3B'a(2-13)) (Cyanobacteria bacterium Yellowstone B-Prime), this protein is Large ribosomal subunit protein bL36.